We begin with the raw amino-acid sequence, 300 residues long: uncharacterized protein (300 aa).

A signal peptide spans 1–20; that stretch reads MRLLISCILILSILVNFISG. The Extracellular segment spans residues 21–279; it reads HAVLVAPTPF…PCSIYGDGNG (259 aa). Asparagine 56, asparagine 217, and asparagine 278 each carry an N-linked (GlcNAc...) asparagine glycan. A helical transmembrane segment spans residues 280 to 300; the sequence is SNLIIIPTLLIISILSLILMF.

Its subcellular location is the membrane. This is an uncharacterized protein from Dictyostelium discoideum (Social amoeba).